The following is a 411-amino-acid chain: Putative competence-damage inducible protein (411 aa).

This sequence belongs to the CinA family.

This chain is Putative competence-damage inducible protein, found in Caldicellulosiruptor bescii (strain ATCC BAA-1888 / DSM 6725 / KCTC 15123 / Z-1320) (Anaerocellum thermophilum).